Reading from the N-terminus, the 1254-residue chain is DNA polymerase gamma (1254 aa).

A compositionally biased stretch (basic and acidic residues) spans 1125-1137 (RKKENRIDDENKK). Disordered stretches follow at residues 1125–1145 (RKKENRIDDENKKKLTRKKNT) and 1202–1240 (YKKKPSQARTASSSPIRKTAKAVHSKKLPARKSSTTNRN). Over residues 1208–1217 (QARTASSSPI) the composition is skewed to polar residues. Residues 1219 to 1231 (KTAKAVHSKKLPA) are compositionally biased toward basic residues.

It belongs to the DNA polymerase type-A family. Requires Mg(2+) as cofactor.

Its subcellular location is the mitochondrion. The enzyme catalyses DNA(n) + a 2'-deoxyribonucleoside 5'-triphosphate = DNA(n+1) + diphosphate. Its function is as follows. Involved in the replication of mitochondrial DNA. This chain is DNA polymerase gamma (MIP1), found in Saccharomyces cerevisiae (strain ATCC 204508 / S288c) (Baker's yeast).